The primary structure comprises 341 residues: UDP-3-O-(3-hydroxymyristoyl)glucosamine N-acyltransferase (341 aa).

The active-site Proton acceptor is the H239.

Belongs to the transferase hexapeptide repeat family. LpxD subfamily. Homotrimer.

The enzyme catalyses a UDP-3-O-[(3R)-3-hydroxyacyl]-alpha-D-glucosamine + a (3R)-hydroxyacyl-[ACP] = a UDP-2-N,3-O-bis[(3R)-3-hydroxyacyl]-alpha-D-glucosamine + holo-[ACP] + H(+). It carries out the reaction UDP-3-O-[(3R)-3-hydroxytetradecanoyl]-alpha-D-glucosamine + (3R)-hydroxytetradecanoyl-[ACP] = UDP-2-N,3-O-bis[(3R)-3-hydroxytetradecanoyl]-alpha-D-glucosamine + holo-[ACP] + H(+). It functions in the pathway glycolipid biosynthesis; lipid IV(A) biosynthesis; lipid IV(A) from (3R)-3-hydroxytetradecanoyl-[acyl-carrier-protein] and UDP-N-acetyl-alpha-D-glucosamine: step 3/6. Catalyzes the N-acylation of UDP-3-O-(hydroxytetradecanoyl)glucosamine using 3-hydroxytetradecanoyl-ACP as the acyl donor. Is involved in the biosynthesis of lipid A, a phosphorylated glycolipid that anchors the lipopolysaccharide to the outer membrane of the cell. The protein is UDP-3-O-(3-hydroxymyristoyl)glucosamine N-acyltransferase of Salmonella choleraesuis (strain SC-B67).